The primary structure comprises 3066 residues: Genome polyprotein (3066 aa).

The region spanning 176–317 is the Peptidase S30 domain; it reads LKKAVGSGKV…LDNVYTIEHY (142 aa). Residues H230, E239, and S271 each act as for P1 proteinase activity in the active site. Positions 370 to 373 match the Involved in interaction with stylet and aphid transmission motif; the sequence is KLSC. Positions 626-628 match the Involved in virions binding and aphid transmission motif; sequence PTK. Residues 652–774 enclose the Peptidase C6 domain; the sequence is MYIAKEGYCY…EGEMKHYRVG (123 aa). Active-site for helper component proteinase activity residues include C660 and H733. The 153-residue stretch at 1245–1397 folds into the Helicase ATP-binding domain; the sequence is TITLSTSTEF…TQHPVKLKVE (153 aa). 1258-1265 lines the ATP pocket; the sequence is GAVGSGKS. The DECH box signature appears at 1347 to 1350; that stretch reads DECH. The 160-residue stretch at 1416–1575 folds into the Helicase C-terminal domain; the sequence is DMVQYGHNLL…GLPVTTQGVS (160 aa). The Nuclear localization signal motif lies at 1900 to 1909; that stretch reads KKGKQKGSTH. An O-(5'-phospho-RNA)-tyrosine modification is found at Y1924. The Peptidase C4 domain occupies 2046–2264; the sequence is SKSTYKGLRD…IAWGSLNLVD (219 aa). Active-site for nuclear inclusion protein A activity residues include H2091, D2126, and C2196. A RdRp catalytic domain is found at 2530-2654; that stretch reads WVYCHADGSQ…AVQKEDVWLY (125 aa). The interval 2797–2839 is disordered; sequence EVYESVSTQSSKKEEEKDAGADEREKDKGKGPADKDVGAGSKG. Residues 2807–2833 are compositionally biased toward basic and acidic residues; the sequence is SKKEEEKDAGADEREKDKGKGPADKDV. Phosphothreonine is present on T3048.

The protein belongs to the potyviridae genome polyprotein family. Interacts with host eIF4E protein (via cap-binding region); this interaction mediates the translation of the VPg-viral RNA conjugates. Part of a complex that comprises VPg, RNA, host EIF4E and EIF4G; this interaction mediates the translation of the VPg-viral RNA conjugates. In terms of processing, VPg is uridylylated by the polymerase and is covalently attached to the 5'-end of the genomic RNA. This uridylylated form acts as a nucleotide-peptide primer for the polymerase. Genome polyprotein of potyviruses undergoes post-translational proteolytic processing by the main proteinase NIa-pro resulting in the production of at least ten individual proteins. The P1 proteinase and the HC-pro cleave only their respective C-termini autocatalytically. 6K1 is essential for proper proteolytic separation of P3 from CI.

It is found in the host cytoplasmic vesicle. The protein resides in the host nucleus. Its subcellular location is the virion. It carries out the reaction RNA(n) + a ribonucleoside 5'-triphosphate = RNA(n+1) + diphosphate. It catalyses the reaction Hydrolyzes glutaminyl bonds, and activity is further restricted by preferences for the amino acids in P6 - P1' that vary with the species of potyvirus, e.g. Glu-Xaa-Xaa-Tyr-Xaa-Gln-|-(Ser or Gly) for the enzyme from tobacco etch virus. The natural substrate is the viral polyprotein, but other proteins and oligopeptides containing the appropriate consensus sequence are also cleaved.. The enzyme catalyses Hydrolyzes a Gly-|-Gly bond at its own C-terminus, commonly in the sequence -Tyr-Xaa-Val-Gly-|-Gly, in the processing of the potyviral polyprotein.. Functionally, required for aphid transmission and also has proteolytic activity. Only cleaves a Gly-Gly dipeptide at its own C-terminus. Interacts with virions and aphid stylets. Acts as a suppressor of RNA-mediated gene silencing, also known as post-transcriptional gene silencing (PTGS), a mechanism of plant viral defense that limits the accumulation of viral RNAs. May have RNA-binding activity. In terms of biological role, has helicase activity. It may be involved in replication. Indispensable for virus replication. Reduces the abundance of host transcripts related to jasmonic acid biosynthesis therefore altering the host defenses. In order to increase its own stability, decreases host protein degradation pathways. Its function is as follows. Indispensable for virus replication. Functionally, mediates the cap-independent, EIF4E-dependent translation of viral genomic RNAs. Binds to the cap-binding site of host EIF4E and thus interferes with the host EIF4E-dependent mRNA export and translation. VPg-RNA directly binds EIF4E and is a template for transcription. Also forms trimeric complexes with EIF4E-EIF4G, which are templates for translation. In terms of biological role, has RNA-binding and proteolytic activities. An RNA-dependent RNA polymerase that plays an essential role in the virus replication. Its function is as follows. Involved in aphid transmission, cell-to-cell and systemis movement, encapsidation of the viral RNA and in the regulation of viral RNA amplification. The polypeptide is Genome polyprotein (Bean common mosaic necrosis virus (strain NL-3) (BCMNV)).